A 199-amino-acid polypeptide reads, in one-letter code: Imidazole glycerol phosphate synthase subunit HisH 2 (199 aa).

One can recognise a Glutamine amidotransferase type-1 domain in the interval 1-199; sequence MIAVIDVSGN…NNFLSLESKC (199 aa). The active-site Nucleophile is the C76. Catalysis depends on residues H177 and E179.

As to quaternary structure, heterodimer of HisH and HisF.

The protein resides in the cytoplasm. The enzyme catalyses 5-[(5-phospho-1-deoxy-D-ribulos-1-ylimino)methylamino]-1-(5-phospho-beta-D-ribosyl)imidazole-4-carboxamide + L-glutamine = D-erythro-1-(imidazol-4-yl)glycerol 3-phosphate + 5-amino-1-(5-phospho-beta-D-ribosyl)imidazole-4-carboxamide + L-glutamate + H(+). The catalysed reaction is L-glutamine + H2O = L-glutamate + NH4(+). The protein operates within amino-acid biosynthesis; L-histidine biosynthesis; L-histidine from 5-phospho-alpha-D-ribose 1-diphosphate: step 5/9. IGPS catalyzes the conversion of PRFAR and glutamine to IGP, AICAR and glutamate. The HisH subunit provides the glutamine amidotransferase activity that produces the ammonia necessary to HisF for the synthesis of IGP and AICAR. This chain is Imidazole glycerol phosphate synthase subunit HisH 2, found in Legionella pneumophila (strain Lens).